The primary structure comprises 306 residues: Ribonuclease Z (306 aa).

Histidine 63, histidine 65, aspartate 67, histidine 68, histidine 141, aspartate 208, and histidine 266 together coordinate Zn(2+). Catalysis depends on aspartate 67, which acts as the Proton acceptor.

The protein belongs to the RNase Z family. Homodimer. The cofactor is Zn(2+).

The enzyme catalyses Endonucleolytic cleavage of RNA, removing extra 3' nucleotides from tRNA precursor, generating 3' termini of tRNAs. A 3'-hydroxy group is left at the tRNA terminus and a 5'-phosphoryl group is left at the trailer molecule.. Zinc phosphodiesterase, which displays some tRNA 3'-processing endonuclease activity. Probably involved in tRNA maturation, by removing a 3'-trailer from precursor tRNA. This is Ribonuclease Z from Chlamydia abortus (strain DSM 27085 / S26/3) (Chlamydophila abortus).